A 1352-amino-acid polypeptide reads, in one-letter code: Patatin-like phospholipase domain-containing protein 7 (1352 aa).

Residues 1 to 36 (MQNEEDACLEAGYCLGTTLSSWRLHFMEEQSQSTML) lie on the Lumenal side of the membrane. A helical membrane pass occupies residues 37-57 (MGIGIGALLTLAFVGITFFFV). At 58–1352 (YRRVRRLRRA…DQGPRLEHPS (1295 aa)) the chain is on the cytoplasmic side. Residue 170 to 297 (VLGHFEKPLF…VRVVQIIMVR (128 aa)) coordinates a nucleoside 3',5'-cyclic phosphate. The interval 340–364 (MSYGPEEQLERSLRPSEFSSSDHGS) is disordered. Phosphoserine is present on residues Ser-341 and Ser-379. The interval 384–411 (SNHGEVDELRQSQGSGSNTSAFQESHEG) is disordered. Residues 394-406 (QSQGSGSNTSAFQ) are compositionally biased toward polar residues. A nucleoside 3',5'-cyclic phosphate-binding positions include 499–585 (FLHV…YEIM) and 613–718 (ALDW…LGEK). Residues 681–967 (VHAVRDSELA…RGCAQVGILR (287 aa)) are involved in the binding to lipid droplets. The PNPLA domain maps to 950 to 1116 (LVLGGGGARG…INNLPADVAR (167 aa)). The GXGXXG motif lies at 954-959 (GGGARG). Residues 981–985 (GTSIG) carry the GXSXG motif. Ser-983 acts as the Nucleophile in catalysis. Residue Asp-1103 is the Proton acceptor of the active site. Positions 1103 to 1105 (DGG) match the DGA/G motif. Ser-1280 is subject to Phosphoserine. Thr-1284 is subject to Phosphothreonine. Positions 1295-1352 (KETYADFQSTGIELDSDSEYEPSMLQGPPSLTSPEQSQDSFPWLPNQDDQGPRLEHPS) are disordered. Polar residues predominate over residues 1323–1334 (PSLTSPEQSQDS).

Belongs to the NTE family. Expressed in white and brown adipose tissue, cardiac muscle, skeletal muscle, and testis. As to expression, expressed in white adipose tissue, cardiac muscle, skeletal muscle, and testis.

It localises to the endoplasmic reticulum membrane. It is found in the lipid droplet. The enzyme catalyses a 1-acyl-sn-glycero-3-phosphocholine + H2O = sn-glycerol 3-phosphocholine + a fatty acid + H(+). It carries out the reaction 1-(9Z-octadecenoyl)-sn-glycero-3-phosphocholine + H2O = sn-glycerol 3-phosphocholine + (9Z)-octadecenoate + H(+). The catalysed reaction is 1-(9Z-octadecenoyl)-sn-glycero-3-phosphoethanolamine + H2O = sn-glycero-3-phosphoethanolamine + (9Z)-octadecenoate + H(+). It catalyses the reaction 1-(9Z-octadecenoyl)-sn-glycero-3-phospho-L-serine + H2O = sn-glycero-3-phospho-L-serine + (9Z)-octadecenoate + H(+). The enzyme catalyses 1-hexadecanoyl-sn-glycero-3-phosphocholine + H2O = sn-glycerol 3-phosphocholine + hexadecanoate + H(+). It carries out the reaction 1-hexadecanoyl-sn-glycero-3-phosphate + H2O = sn-glycerol 3-phosphate + hexadecanoate + H(+). CAMP does not regulate lysophospholipase activity in vitro. Slightly inhibited by organophosphorus (OP) compounds such as mipafox, which is likely why mice are less sensitive to distal axonophathy induced by OPs compared to humans. Its function is as follows. Lysophospholipase which preferentially deacylates unsaturated lysophosphatidylcholine (C18:1), generating glycerophosphocholine. Can also deacylate, to a lesser extent, lysophosphatidylethanolamine (C18:1), lysophosphatidyl-L-serine (C18:1) and lysophosphatidic acid (C16:0). In terms of biological role, lysophospholipase. Functionally, lacks lysophospholipase activity. This chain is Patatin-like phospholipase domain-containing protein 7 (Pnpla7), found in Mus musculus (Mouse).